The chain runs to 345 residues: Uroporphyrinogen decarboxylase (345 aa).

Substrate contacts are provided by residues 27 to 31, D77, Y152, S207, and H323; that span reads RQAGR.

Belongs to the uroporphyrinogen decarboxylase family. As to quaternary structure, homodimer.

The protein localises to the cytoplasm. It catalyses the reaction uroporphyrinogen III + 4 H(+) = coproporphyrinogen III + 4 CO2. It participates in porphyrin-containing compound metabolism; protoporphyrin-IX biosynthesis; coproporphyrinogen-III from 5-aminolevulinate: step 4/4. Its function is as follows. Catalyzes the decarboxylation of four acetate groups of uroporphyrinogen-III to yield coproporphyrinogen-III. This is Uroporphyrinogen decarboxylase from Maricaulis maris (strain MCS10) (Caulobacter maris).